The sequence spans 342 residues: Foldase protein PrsA (342 aa).

The N-terminal stretch at 1 to 20 is a signal peptide; that stretch reads MKKKLILAAAGAMAVFSLAA. C21 carries N-palmitoyl cysteine lipidation. Residue C21 is the site of S-diacylglycerol cysteine attachment. Residues 142-235 form the PpiC domain; it reads HPEVEAQIIQ…QTYQTTYYVV (94 aa). The segment at 297-342 is disordered; sequence MQTESSSASSEKKESKSSDSKTSDTKTSDSEKATDSSSKTTESSSK. Positions 306-330 are enriched in basic and acidic residues; the sequence is SEKKESKSSDSKTSDTKTSDSEKAT. Residues 331 to 342 are compositionally biased toward low complexity; that stretch reads DSSSKTTESSSK.

It belongs to the PrsA family.

It localises to the cell membrane. The catalysed reaction is [protein]-peptidylproline (omega=180) = [protein]-peptidylproline (omega=0). Functionally, plays a major role in protein secretion by helping the post-translocational extracellular folding of several secreted proteins. This Enterococcus faecalis (strain ATCC 700802 / V583) protein is Foldase protein PrsA.